The sequence spans 442 residues: 2-oxoisovalerate dehydrogenase subunit alpha, mitochondrial (442 aa).

The N-terminal 42 residues, 1-42 (MSAAKIWRPSRGLRQAALLLLGRSGVRGLARSHPSRQQQQQF), are a transit peptide targeting the mitochondrion. Residues 30–50 (ARSHPSRQQQQQFPSLDDKPQ) form a disordered region. 2 residues coordinate thiamine diphosphate: tyrosine 155 and arginine 156. Residue serine 203 coordinates K(+). A thiamine diphosphate-binding site is contributed by serine 204. Residues proline 205, threonine 208, and glutamine 209 each coordinate K(+). A Mg(2+)-binding site is contributed by glutamate 235. Positions 236, 237, and 262 each coordinate thiamine diphosphate. The Mg(2+) site is built by asparagine 264 and tyrosine 266. Histidine 333 lines the thiamine diphosphate pocket. Residue serine 334 is modified to Phosphoserine; by BCKDK. The residue at position 335 (threonine 335) is a Phosphothreonine. A phosphoserine mark is found at serine 336 and serine 344. Lysine 353 carries the post-translational modification N6-acetyllysine; alternate. Lysine 353 is modified (N6-succinyllysine; alternate). Lysine 377 carries the post-translational modification N6-succinyllysine.

Belongs to the BCKDHA family. As to quaternary structure, heterotetramer of 2 alpha/BCKDHA and 2 beta chains/BCKDHB that forms the branched-chain alpha-keto acid decarboxylase (E1) component of the BCKD complex. The branched-chain alpha-ketoacid dehydrogenase is a large complex composed of three major building blocks E1, E2 and E3. It is organized around E2, a 24-meric cubic core composed of DBT, to which are associated 6 to 12 copies of E1, and approximately 6 copies of the dehydrogenase E3, a DLD dimer. Interacts with PPM1K. The cofactor is thiamine diphosphate. It depends on Mg(2+) as a cofactor. In terms of processing, phosphorylated at Ser-334 by BCKDK and dephosphorylated by protein phosphatase PPM1K.

The protein localises to the mitochondrion matrix. The enzyme catalyses N(6)-[(R)-lipoyl]-L-lysyl-[protein] + 3-methyl-2-oxobutanoate + H(+) = N(6)-[(R)-S(8)-2-methylpropanoyldihydrolipoyl]-L-lysyl-[protein] + CO2. Together with BCKDHB forms the heterotetrameric E1 subunit of the mitochondrial branched-chain alpha-ketoacid dehydrogenase (BCKD) complex. The BCKD complex catalyzes the multi-step oxidative decarboxylation of alpha-ketoacids derived from the branched-chain amino-acids valine, leucine and isoleucine producing CO2 and acyl-CoA which is subsequently utilized to produce energy. The E1 subunit catalyzes the first step with the decarboxylation of the alpha-ketoacid forming an enzyme-product intermediate. A reductive acylation mediated by the lipoylamide cofactor of E2 extracts the acyl group from the E1 active site for the next step of the reaction. In Mus musculus (Mouse), this protein is 2-oxoisovalerate dehydrogenase subunit alpha, mitochondrial.